A 252-amino-acid chain; its full sequence is TLC domain-containing protein 1 (252 aa).

An N-terminal signal peptide occupies residues 1 to 29 (MGPGWRAPSAALVGGSVALFGALRRAALA). Residues 30–47 (LPRPAAVRSRPGRVWRWR) lie on the Extracellular side of the membrane. Positions 41-235 (GRVWRWRNLL…LLRSDFFPSL (195 aa)) constitute a TLC domain. A helical membrane pass occupies residues 48–68 (NLLVSFAHSVLAGLWALFSLW). The Cytoplasmic portion of the chain corresponds to 69 to 84 (QSPELLSDIQDGYSVS). A helical transmembrane segment spans residues 85 to 105 (GHLLVCFSSGYFIHDSLDIIF). Over 106 to 124 (NQQSRSSWEYLVHHAMAIS) the chain is Extracellular. An intramembrane region (helical) is located at residues 125 to 145 (AFVSLIITGRFLVAAMLLLLV). Over 146–174 (EVSNIFLTIRMLLKMSNVPSPALYEANKY) the chain is Extracellular. Residues 175–195 (VNLVMYFAFRLAPQVYLTWYF) traverse the membrane as a helical segment. Residues 196-202 (VRYVEVQ) are Cytoplasmic-facing. Residues 203 to 223 (GQGAFLMANLLLLDAMILMYF) form a helical membrane-spanning segment. The Extracellular segment spans residues 224-252 (SRLLRSDFFPSLRKGSVGRDVDGEKFLID).

In terms of assembly, interacts with CACNA1C in vitro; however the relevance of the interaction in vivo is unclear.

It localises to the cell membrane. Functionally, regulates the composition and fluidity of the plasma membrane. Inhibits the incorporation of membrane-fluidizing phospholipids containing omega-3 long-chain polyunsaturated fatty acids (LCPUFA) and thereby promotes membrane rigidity. Does not appear to have any effect on LCPUFA synthesis. The protein is TLC domain-containing protein 1 (TLCD1) of Gallus gallus (Chicken).